The following is a 435-amino-acid chain: MSTIVKVLGREIMDSRGNPTVEAEVHLADGSIGMAAAPSGASTGSREALELRDGDKARYLGKGVLKAVTAVNGPIAEALIGKDAVKQAELDQIMIDLDGTENKAKFGANAILAVSLAAAKAAAVSKKVPLYAHIADLNGTPGVYSMPLPMMNIINGGEHADNSVDIQEFMIQPVGASTFREGLRMGAEVFHSLAKVLKADGHSTAVGDEGGFAPNLESNAAALAAIKVAVANAGYELGKDITLAMDCAASEFYNKETGMYELKGEGKTFTAKEFNYFLEDLVNQYPIVSIEDGLDESDWDGFKHQTELLGDKIQLVGDDLFVTNTKILARGIKEGITNSILIKFNQIGSLTETLAAIKMAKDAGFTAVISHRSGETEDSTIADLAVGTAAGQIKTGSLSRSDRVAKYNQLLRIEEALGSKAPYNGLKEVKGTFNF.

Gln-167 contacts (2R)-2-phosphoglycerate. Residue Glu-209 is the Proton donor of the active site. Asp-246, Glu-291, and Asp-318 together coordinate Mg(2+). (2R)-2-phosphoglycerate is bound by residues Lys-343, Arg-372, Ser-373, and Lys-394. Residue Lys-343 is the Proton acceptor of the active site.

This sequence belongs to the enolase family. As to quaternary structure, component of the RNA degradosome, a multiprotein complex involved in RNA processing and mRNA degradation. Mg(2+) is required as a cofactor.

It localises to the cytoplasm. The protein resides in the secreted. It is found in the cell surface. It catalyses the reaction (2R)-2-phosphoglycerate = phosphoenolpyruvate + H2O. Its pathway is carbohydrate degradation; glycolysis; pyruvate from D-glyceraldehyde 3-phosphate: step 4/5. Its function is as follows. Catalyzes the reversible conversion of 2-phosphoglycerate (2-PG) into phosphoenolpyruvate (PEP). It is essential for the degradation of carbohydrates via glycolysis. This is Enolase from Psychromonas ingrahamii (strain DSM 17664 / CCUG 51855 / 37).